The primary structure comprises 244 residues: Eukaryotic translation initiation factor 6 (244 aa).

2 positions are modified to phosphoserine; by CK1: S174 and S175.

Belongs to the eIF-6 family. In terms of assembly, monomer. Associates with the 60S ribosomal subunit. Phosphorylation at Ser-174 and Ser-175 promotes nuclear export.

It localises to the cytoplasm. The protein resides in the nucleus. The protein localises to the nucleolus. Its function is as follows. Binds to the 60S ribosomal subunit and prevents its association with the 40S ribosomal subunit to form the 80S initiation complex in the cytoplasm. Is also involved in ribosome biogenesis. Associates with pre-60S subunits in the nucleus and is involved in its nuclear export. This Schizosaccharomyces pombe (strain 972 / ATCC 24843) (Fission yeast) protein is Eukaryotic translation initiation factor 6 (tif6).